Consider the following 249-residue polypeptide: 5'-nucleotidase SurE (249 aa).

Positions 9, 10, 40, and 92 each coordinate a divalent metal cation.

This sequence belongs to the SurE nucleotidase family. It depends on a divalent metal cation as a cofactor.

Its subcellular location is the cytoplasm. It catalyses the reaction a ribonucleoside 5'-phosphate + H2O = a ribonucleoside + phosphate. In terms of biological role, nucleotidase that shows phosphatase activity on nucleoside 5'-monophosphates. In Shewanella sediminis (strain HAW-EB3), this protein is 5'-nucleotidase SurE.